A 361-amino-acid chain; its full sequence is Carbon monoxide-induced hydrogenase (361 aa).

The Ni(2+) site is built by Cys64, Cys67, Cys355, and Cys358.

The protein to E.coli formate hydrogenlyase hydrogenase isozyme 3 and to bovine mitochondrial NADH-ubiquinone oxidoreductase. Ni(2+) serves as cofactor.

Functionally, the carbon monoxide dehydrogenase (CODH) oxidizes carbon monoxide coupled, via CooF, to the reduction of a hydrogen cation by a hydrogenase (probably CooH). In Rhodospirillum rubrum, this protein is Carbon monoxide-induced hydrogenase (cooH).